Consider the following 462-residue polypeptide: uncharacterized protein (462 aa).

2 consecutive transmembrane segments (helical) span residues 381–401 (WILGSMILFTILASILRFKGM) and 433–453 (LWILEPIIRVTSLILLGNLYI).

The protein localises to the cell membrane. This is an uncharacterized protein from Methanocaldococcus jannaschii (strain ATCC 43067 / DSM 2661 / JAL-1 / JCM 10045 / NBRC 100440) (Methanococcus jannaschii).